Consider the following 182-residue polypeptide: Transcription termination/antitermination protein NusG (182 aa).

It belongs to the NusG family.

Functionally, participates in transcription elongation, termination and antitermination. The chain is Transcription termination/antitermination protein NusG from Chlamydia pneumoniae (Chlamydophila pneumoniae).